The chain runs to 971 residues: Unconventional myosin-XIX (971 aa).

Positions methionine 1–asparagine 25 are disordered. A Myosin motor domain is found at histidine 48 to leucine 755. Residue glycine 145–threonine 152 participates in ATP binding. The tract at residues leucine 611 to valine 633 is actin-binding. IQ domains lie at isoleucine 758–isoleucine 787 and glutamine 780–valine 809. A myMOMA region region spans residues alanine 826 to valine 971.

Belongs to the TRAFAC class myosin-kinesin ATPase superfamily. Myosin family. Myosin is a hexamer of 2 heavy chains and 4 light chains.

The protein localises to the mitochondrion outer membrane. It localises to the cytoplasm. Its subcellular location is the cytoskeleton. In terms of biological role, actin-based motor molecule with ATPase activity that localizes to the mitochondrion outer membrane. Motor protein that moves towards the plus-end of actin filaments. Required for mitochondrial inheritance during mitosis. May be involved in mitochondrial transport or positioning. In Xenopus laevis (African clawed frog), this protein is Unconventional myosin-XIX.